The sequence spans 456 residues: MNSSDEEKQLQLITSLKEQAIGEYEDLRAENQKTKEKCDKIRQERDEAVKKLEEFQKISHMVIEEVNFMQNHLEIEKTCRESAEALATKLNKENKTLKRISMLYMAKLGPDVITEEINIDDEDSTTDTDGAAETCVSVQCQKQIKELRDQIVSVQEEKKILAIELENLKSKLVEVIEEVNKVKQEKAVLNSEVLEQRKVLEKCNRVSMLAVEEYEEMQVNLELEKDLRKKAESFAQEMFIEQNKLKRQSHLLLQSSVPDQQLSKALDENAKLTQQLEEERIQHQQKVKELKEQLENETLHKEIHNLKQQLELLEEDKKELELKYQNSEEKARNLKHSVDELQKRVNQSENSVPPPPPPPPPLPPPPPNPIRSFMSMIRKRSHPSGSGAKKEKATQPETPEEVTDLKRQAVEEMMDRIKKGVHLRPVNQTARPKTKPESSKGCESAVDELKGILASQ.

An N-acetylmethionine modification is found at M1. S3 and S4 each carry phosphoserine. The stretch at 7–353 (EKQLQLITSL…RVNQSENSVP (347 aa)) forms a coiled coil. Residues S101 and S249 each carry the phosphoserine; by PAK1 modification. Disordered regions lie at residues 343–405 (KRVN…VTDL) and 418–445 (KKGVHLRPVNQTARPKTKPESSKGCESA). Pro residues predominate over residues 352–369 (VPPPPPPPPPLPPPPPNP). At S375 the chain carries Phosphoserine.

It belongs to the shootin family. As to quaternary structure, interacts with L1CAM; this interaction occurs in axonal growth cones. Interacts with actin filament retrograde flow; this interaction is enhanced in a netrin-1- and PAK1-dependent manner and promotes F-actin-substrate coupling and concomitant formation of traction forces at axonal growth cones. Interacts with RUFY3. Interacts with PFN2. Interacts (via N-terminus) with KIF20B; this interaction is direct and promotes the association of SHTN1 to microtubules in primary neurons. Associates with microtubule. In terms of processing, phosphorylated on Ser-101 and Ser-249 by PAK1 through a CDC42- and RAC1-dependent signaling pathway, which enhances its association with F-actin retrograde flow in filopodia and lamellipodia of axonal growth cones. Phosphorylation on Ser-101 and Ser-249 is increased by netrin-1.

It localises to the perikaryon. It is found in the cell projection. Its subcellular location is the axon. The protein localises to the growth cone. The protein resides in the cytoplasm. It localises to the cytoskeleton. It is found in the filopodium. Its subcellular location is the lamellipodium. Its function is as follows. Involved in the generation of internal asymmetric signals required for neuronal polarization and neurite outgrowth. Mediates netrin-1-induced F-actin-substrate coupling or 'clutch engagement' within the axon growth cone through activation of CDC42, RAC1 and PAK1-dependent signaling pathway, thereby converting the F-actin retrograde flow into traction forces, concomitantly with filopodium extension and axon outgrowth. Plays a role in cytoskeletal organization by regulating the subcellular localization of phosphoinositide 3-kinase (PI3K) activity at the axonal growth cone. Also plays a role in regenerative neurite outgrowth. In the developing cortex, cooperates with KIF20B to promote both the transition from the multipolar to the bipolar stage and the radial migration of cortical neurons from the ventricular zone toward the superficial layer of the neocortex. Involved in the accumulation of phosphatidylinositol 3,4,5-trisphosphate (PIP3) in the growth cone of primary hippocampal neurons. This chain is Shootin-1, found in Pongo abelii (Sumatran orangutan).